Here is a 472-residue protein sequence, read N- to C-terminus: Ribosomal protein uS12 methylthiotransferase RimO (472 aa).

The MTTase N-terminal domain maps to 33–143 (NRIGFVSLGC…VLKHVHKYVP (111 aa)). The [4Fe-4S] cluster site is built by cysteine 42, cysteine 78, cysteine 107, cysteine 175, cysteine 179, and cysteine 182. One can recognise a Radical SAM core domain in the interval 161-398 (LTPKHYAYLK…MELQAEISAE (238 aa)). Positions 401-467 (ARFVGRTLDI…EHDLWAEVVD (67 aa)) constitute a TRAM domain.

Belongs to the methylthiotransferase family. RimO subfamily. [4Fe-4S] cluster serves as cofactor.

It localises to the cytoplasm. The catalysed reaction is L-aspartate(89)-[ribosomal protein uS12]-hydrogen + (sulfur carrier)-SH + AH2 + 2 S-adenosyl-L-methionine = 3-methylsulfanyl-L-aspartate(89)-[ribosomal protein uS12]-hydrogen + (sulfur carrier)-H + 5'-deoxyadenosine + L-methionine + A + S-adenosyl-L-homocysteine + 2 H(+). In terms of biological role, catalyzes the methylthiolation of an aspartic acid residue of ribosomal protein uS12. This Shewanella sp. (strain W3-18-1) protein is Ribosomal protein uS12 methylthiotransferase RimO.